Reading from the N-terminus, the 481-residue chain is Probable cytosol aminopeptidase (481 aa).

Residues Lys-247 and Asp-252 each coordinate Mn(2+). Lys-259 is an active-site residue. 3 residues coordinate Mn(2+): Asp-270, Asp-329, and Glu-331. Residue Arg-333 is part of the active site.

The protein belongs to the peptidase M17 family. The cofactor is Mn(2+).

Its subcellular location is the cytoplasm. The enzyme catalyses Release of an N-terminal amino acid, Xaa-|-Yaa-, in which Xaa is preferably Leu, but may be other amino acids including Pro although not Arg or Lys, and Yaa may be Pro. Amino acid amides and methyl esters are also readily hydrolyzed, but rates on arylamides are exceedingly low.. It catalyses the reaction Release of an N-terminal amino acid, preferentially leucine, but not glutamic or aspartic acids.. Presumably involved in the processing and regular turnover of intracellular proteins. Catalyzes the removal of unsubstituted N-terminal amino acids from various peptides. The chain is Probable cytosol aminopeptidase from Clostridium tetani (strain Massachusetts / E88).